A 207-amino-acid polypeptide reads, in one-letter code: Large ribosomal subunit protein uL4 (207 aa).

Residues arginine 52 to serine 77 are disordered.

This sequence belongs to the universal ribosomal protein uL4 family. Part of the 50S ribosomal subunit.

One of the primary rRNA binding proteins, this protein initially binds near the 5'-end of the 23S rRNA. It is important during the early stages of 50S assembly. It makes multiple contacts with different domains of the 23S rRNA in the assembled 50S subunit and ribosome. Its function is as follows. Forms part of the polypeptide exit tunnel. The protein is Large ribosomal subunit protein uL4 of Moorella thermoacetica (strain ATCC 39073 / JCM 9320).